A 470-amino-acid polypeptide reads, in one-letter code: Argininosuccinate lyase (470 aa).

The protein belongs to the lyase 1 family. Argininosuccinate lyase subfamily.

Its subcellular location is the cytoplasm. The catalysed reaction is 2-(N(omega)-L-arginino)succinate = fumarate + L-arginine. Its pathway is amino-acid biosynthesis; L-arginine biosynthesis; L-arginine from L-ornithine and carbamoyl phosphate: step 3/3. The polypeptide is Argininosuccinate lyase (Mycobacterium marinum (strain ATCC BAA-535 / M)).